The chain runs to 359 residues: Protein mab-21-like 2 (359 aa).

Belongs to the mab-21 family.

It is found in the nucleus. Its subcellular location is the cytoplasm. Functionally, required for eye morphogenesis. May promote the survival of proliferating retinal progenitor cells. The polypeptide is Protein mab-21-like 2 (mab21l2) (Danio rerio (Zebrafish)).